Consider the following 589-residue polypeptide: Progranulin (589 aa).

The first 17 residues, M1–G17, serve as a signal peptide directing secretion. The N-linked (GlcNAc...) asparagine glycan is linked to N38. 2 disulfide bridges follow: C125–C138 and C132–C148. N263 carries an N-linked (GlcNAc...) asparagine glycan. 10 cysteine pairs are disulfide-bonded: C282-C294, C288-C304, C295-C312, C305-C319, C313-C326, C320-C333, C364-C376, C370-C386, C395-C408, and C402-C414. The N-linked (GlcNAc...) asparagine glycan is linked to N373. N526 carries N-linked (GlcNAc...) asparagine glycosylation.

The protein belongs to the granulin family. Progranulin is secreted as a homodimer. Interacts with SLPI; interaction protects progranulin from proteolysis. Interacts (via region corresponding to granulin-7 peptide) with CTSD; stabilizes CTSD and increases its proteolytic activity. Interacts (via region corresponding to granulin-7 peptide) with SORT1; this interaction mediates endocytosis and lysosome delivery of progranulin; interaction occurs at the neuronal cell surface in a stressed nervous system. Interacts with PSAP; facilitates lysosomal delivery of progranulin from the extracellular space and the biosynthetic pathway. Forms a complex with PSAP and M6PR; PSAP bridges the binding between progranulin and M6PR. Forms a complex with PSAP and SORT1; progranulin bridges the interaction between PSAP and SORT1; facilitates lysosomal targeting of PSAP via SORT1; interaction enhances PSAP uptake in primary cortical neurons. Interacts (via regions corresponding to granulin-2 and granulin-7 peptides) with GBA1; this interaction prevents aggregation of GBA1-SCARB2 complex via interaction with HSPA1A upon stress. Interacts (via region corresponding to granulin-7 peptide) with HSPA1A; mediates recruitment of HSPA1A to GBA1 and prevents GBA1 aggregation in response to stress. N-glycosylated. In terms of processing, cleaved by ELANE; proteolysis is blocked by SLPI and is concentration- and time-dependent and induces CXCL8/IL-8 production; granulin-3 and granulin-4 are resistant to ELANE. Cleaved by CTSL in lysosome thus regulating the maturation and turnover of progranulin within the lysosome. Highly expressed at the wound site and diminishes away from the wound. Not expressed in fibroblasts and endothelial cells in intact skin. In adult brain, expressed primarily in neurons and in resting and reactive microglia. Expressed in both neurons and microglia. Highly expressed in activated microglia in response to injury. Expressed in macrophage.

Its subcellular location is the secreted. The protein resides in the lysosome. Its function is as follows. Secreted protein that acts as a key regulator of lysosomal function and as a growth factor involved in inflammation, wound healing and cell proliferation. Regulates protein trafficking to lysosomes, and also the activity of lysosomal enzymes. Also facilitates the acidification of lysosomes, causing degradation of mature CTSD by CTSB. In addition, functions as a wound-related growth factor that acts directly on dermal fibroblasts and endothelial cells to promote division, migration and the formation of capillary-like tubule structures. Also promotes epithelial cell proliferation by blocking TNF-mediated neutrophil activation preventing release of oxidants and proteases. Moreover, modulates inflammation in neurons by preserving neurons survival, axonal outgrowth and neuronal integrity. Inhibits epithelial cell proliferation and induces epithelial cells to secrete IL-8. In terms of biological role, stabilizes CTSD through interaction with CTSD leading to maintain its aspartic-type peptidase activity. In Mus musculus (Mouse), this protein is Progranulin (Grn).